The following is a 119-amino-acid chain: NADH-quinone oxidoreductase subunit A (119 aa).

3 helical membrane-spanning segments follow: residues 9 to 29 (VLLF…LGYV), 63 to 83 (LVAI…PWAV), and 88 to 108 (VGVT…VGFA).

Belongs to the complex I subunit 3 family. In terms of assembly, NDH-1 is composed of 14 different subunits. Subunits NuoA, H, J, K, L, M, N constitute the membrane sector of the complex.

It localises to the cell inner membrane. The catalysed reaction is a quinone + NADH + 5 H(+)(in) = a quinol + NAD(+) + 4 H(+)(out). NDH-1 shuttles electrons from NADH, via FMN and iron-sulfur (Fe-S) centers, to quinones in the respiratory chain. The immediate electron acceptor for the enzyme in this species is believed to be ubiquinone. Couples the redox reaction to proton translocation (for every two electrons transferred, four hydrogen ions are translocated across the cytoplasmic membrane), and thus conserves the redox energy in a proton gradient. In Acidovorax sp. (strain JS42), this protein is NADH-quinone oxidoreductase subunit A.